Consider the following 142-residue polypeptide: uncharacterized protein (142 aa).

The region spanning 18–137 is the Peptidase C39 domain; sequence QSSGYSCGPA…KIFTGNVLVV (120 aa).

This is an uncharacterized protein from Methanothermobacter marburgensis (strain ATCC BAA-927 / DSM 2133 / JCM 14651 / NBRC 100331 / OCM 82 / Marburg) (Methanobacterium thermoautotrophicum).